The primary structure comprises 87 residues: uncharacterized protein (87 aa).

This is an uncharacterized protein from Methanocaldococcus jannaschii (strain ATCC 43067 / DSM 2661 / JAL-1 / JCM 10045 / NBRC 100440) (Methanococcus jannaschii).